Consider the following 366-residue polypeptide: Alanine racemase (366 aa).

The active-site Proton acceptor; specific for D-alanine is lysine 40. Position 40 is an N6-(pyridoxal phosphate)lysine (lysine 40). Arginine 136 contributes to the substrate binding site. Catalysis depends on tyrosine 263, which acts as the Proton acceptor; specific for L-alanine. Methionine 310 serves as a coordination point for substrate.

Belongs to the alanine racemase family. Pyridoxal 5'-phosphate is required as a cofactor.

It carries out the reaction L-alanine = D-alanine. The protein operates within amino-acid biosynthesis; D-alanine biosynthesis; D-alanine from L-alanine: step 1/1. Its function is as follows. Catalyzes the interconversion of L-alanine and D-alanine. May also act on other amino acids. The chain is Alanine racemase (alr) from Streptococcus equi subsp. zooepidemicus (strain H70).